We begin with the raw amino-acid sequence, 72 residues long: Large ribosomal subunit protein bL31 (72 aa).

The protein belongs to the bacterial ribosomal protein bL31 family. Type A subfamily. Part of the 50S ribosomal subunit.

Binds the 23S rRNA. The chain is Large ribosomal subunit protein bL31 from Deinococcus deserti (strain DSM 17065 / CIP 109153 / LMG 22923 / VCD115).